A 193-amino-acid chain; its full sequence is Auxin-responsive protein IAA23 (193 aa).

A compositionally biased stretch (polar residues) spans 1-12; the sequence is MSTSSGADSSPP. The segment at 1–66 is disordered; the sequence is MSTSSGADSS…SPKARAVGWP (66 aa). A compositionally biased stretch (low complexity) spans 21–36; it reads TALTLALPGSSSSSSS. Residues 23-27 carry the EAR-like (transcriptional repression) motif; sequence LTLAL. Basic and acidic residues predominate over residues 39–53; the sequence is DPERKRAAHADHADA. One can recognise a PB1 domain in the interval 83 to 191; that stretch reads AKLVKVAVDG…EAVNLSPRRS (109 aa).

The protein belongs to the Aux/IAA family. Homodimers and heterodimers. As to expression, highly expressed in roots. Expressed in seedlings.

It is found in the nucleus. Aux/IAA proteins are short-lived transcriptional factors that function as repressors of early auxin response genes at low auxin concentrations. The chain is Auxin-responsive protein IAA23 (IAA23) from Oryza sativa subsp. japonica (Rice).